Consider the following 439-residue polypeptide: Serine/threonine-protein kinase 2 (439 aa).

The region spanning 87 to 439 (NDDFYHISTG…IFSDWINGRN (353 aa)) is the Protein kinase domain. ATP contacts are provided by residues 93 to 101 (ISTGGYGIV) and Lys-117. Residue Asp-307 is the Proton acceptor of the active site.

Belongs to the protein kinase superfamily. Ser/Thr protein kinase family. Poxviruses subfamily. In terms of processing, phosphorylated in vivo. Autophosphorylated in vitro.

The protein localises to the host endoplasmic reticulum. It is found in the host endoplasmic reticulum-Golgi intermediate compartment. The catalysed reaction is L-seryl-[protein] + ATP = O-phospho-L-seryl-[protein] + ADP + H(+). The enzyme catalyses L-threonyl-[protein] + ATP = O-phospho-L-threonyl-[protein] + ADP + H(+). Essential serine-protein kinase involved in the early stage of virion morphogenesis. The chain is Serine/threonine-protein kinase 2 (OPG054) from Homo sapiens (Human).